The chain runs to 27 residues: Potassium channel toxin alpha-KTx 32.1 (27 aa).

2 disulfide bridges follow: Cys5-Cys18 and Cys12-Cys25.

In terms of tissue distribution, expressed by the venom gland.

The protein localises to the secreted. In terms of biological role, blocker of voltage-gated potassium channels. Inhibits voltage-gated potassium channels Kv1.2/KCNA2 (Kd=0.96 nM) and Kv1.3/KCNA3 (Kd=1.3 nM). Does not inhibit Kv1.1/KCNA1, Kv1.5/KCNA5, Kv11.1/KCNH2/ERG1, KCa1.1/KCNMA1, KCa3.1/KCNN4, NaV1.5/SCN5A, NaV1.4/SCN4A or HV1/HVCN1. Strongly inhibits the expression of the activation markers interleukin-2 receptor and CD40 ligand/CD40LG in anti-CD3-activated CD4(+) TEM lymphocytes. The polypeptide is Potassium channel toxin alpha-KTx 32.1 (Centruroides margaritatus (Central American bark Scorpion)).